A 124-amino-acid chain; its full sequence is Small ribosomal subunit protein uS12 (124 aa).

Asp89 is modified (3-methylthioaspartic acid).

This sequence belongs to the universal ribosomal protein uS12 family. Part of the 30S ribosomal subunit. Contacts proteins S8 and S17. May interact with IF1 in the 30S initiation complex.

With S4 and S5 plays an important role in translational accuracy. In terms of biological role, interacts with and stabilizes bases of the 16S rRNA that are involved in tRNA selection in the A site and with the mRNA backbone. Located at the interface of the 30S and 50S subunits, it traverses the body of the 30S subunit contacting proteins on the other side and probably holding the rRNA structure together. The combined cluster of proteins S8, S12 and S17 appears to hold together the shoulder and platform of the 30S subunit. The chain is Small ribosomal subunit protein uS12 from Tolumonas auensis (strain DSM 9187 / NBRC 110442 / TA 4).